The primary structure comprises 74 residues: uncharacterized protein (74 aa).

Residues 35–59 form a dksA C4-type zinc finger; it reads CEECDAPIPAARRAAYPSATRCVSC.

This is an uncharacterized protein from Enterobacteriaceae (Bacteriophage P2).